Consider the following 204-residue polypeptide: MGAYKYIEELWKKKQSDVMRFLQRVRCWEYRQLPGIVRITHPTRPDKARRLGYKAKQGYVVYRVRVRRGGRKRPVPKGIVYGKPKNQGITQLKFQRSLRSVAEERAGRKLGGLRVLNSYWINQDSTYKYYEVVLVDQAHTVIRNDPRINWICNAVHKHRELRGLTSAGKKYRGLRGRGHLYHKARPSKRATWKRNNTLSLRRYR.

Belongs to the eukaryotic ribosomal protein eL15 family.

This Picea mariana (Black spruce) protein is Large ribosomal subunit protein eL15y (SB62).